Reading from the N-terminus, the 579-residue chain is MSALRPLLLLLLHLCPGLGPGHGSEAKVVRSCAETRQVLGARGYSLNLIPPSLISGEHLQVCPQEYTCCSSETEQKLIRDAEVTFRGLVEDSGSFLIHTLAARHRKFNEFFREMLSISQHSLAQLFSHSYGRLYSQHAVIFNSLFSGLRDYYEKSGEGLDDTLADFWAQLLERAFPLLHPQYSFPPDFLLCLTRLTSTADGSLQPFGDSPRRLRLQISRALVAARALVQGLETGRNVVSEALKVPVLEGCRQALMRLIGCPLCRGVPSLMPCRGFCLNVAHGCLSSRGLEPEWGGYLDGLLLLAEKLQGPFSFELAAESIGVKISEGLMHLQENSVKVSAKVFQECGTPHPVQSRSRRAPAPREEASRSWRASAEEERPTTAAGTNLHRLVWELRERLSRVRGFWAGLPVTVCGDSRMAADLSQETAPCWTGVGRGRYMSPVVVGSLNEQLHNPELDTSSPDVPTRRRRLHLRAATARMKAAALGQDLDMHDADEDASGSGGGQQYADDWKAGAVPVVPPARPPRPPRPPRRDGLGVRGGSGSARYNQGRSRNLGSSVGLHTPLVLLLLPSALTLLVLR.

The signal sequence occupies residues 1–21 (MSALRPLLLLLLHLCPGLGPG). O-linked (Xyl...) (heparan sulfate) serine glycans are attached at residues serine 55, serine 92, and serine 155. Disordered regions lie at residues 347–382 (GTPHPVQSRSRRAPAPREEASRSWRASAEEERPTTA) and 483–552 (ALGQ…GRSR). Residues 361-379 (APREEASRSWRASAEEERP) show a composition bias toward basic and acidic residues. Serine 498 and serine 500 each carry an O-linked (Xyl...) (heparan sulfate) serine glycan. The span at 517 to 527 (VVPPARPPRPP) shows a compositional bias: pro residues. Serine 556 is lipidated: GPI-anchor amidated serine. A propeptide spans 557–579 (SVGLHTPLVLLLLPSALTLLVLR) (removed in mature form).

This sequence belongs to the glypican family. Interacts (via heparan sulfate) with PTN; this interaction promotes neurite outgrowth through binding of PTN with chondroitin sulfate of proteoglycans, thereby releasing PTPRS of chondroitin sulfate proteoglycans (CSPGs) and leading to binding with heparan sulfate of GPC2. Interacts (heparan sulfate chain) with MDK; this interaction is inhibited by heparin followed by chondroitin sulfate E; this interaction induces GPC2 clustering through heparan sulfate chain; this interaction induces neuronal cell adhesion and neurite outgrowth.

Its subcellular location is the cell membrane. It localises to the secreted. It is found in the extracellular space. Its function is as follows. Cell surface proteoglycan that bears heparan sulfate. May fulfill a function related to the motile behaviors of developing neurons. The sequence is that of Glypican-2 (Gpc2) from Mus musculus (Mouse).